Consider the following 435-residue polypeptide: DEAD-box ATP-dependent RNA helicase CshB (435 aa).

The short motif at 5 to 33 (SRFDQFGFQPFIGLAIDKLGFYEPTEVQQ) is the Q motif element. A Helicase ATP-binding domain is found at 36–208 (IPGILKGESI…SKYMENPRYE (173 aa)). Residue 49-56 (SQTGTGKT) coordinates ATP. The DEAD box motif lies at 156-159 (DEAD). In terms of domain architecture, Helicase C-terminal spans 235-378 (LLKNVLVGSQ…HVDWKNKEFV (144 aa)). The segment at 383–435 (RNRRAKREAKRETADPREIGMRKKAKQKGKPNYKKKINYKMNEIKRRERRKKR) is disordered. A compositionally biased stretch (basic and acidic residues) spans 391–403 (AKRETADPREIGM). Positions 404–420 (RKKAKQKGKPNYKKKIN) are enriched in basic residues.

It belongs to the DEAD box helicase family. CshB subfamily.

It is found in the cytoplasm. It carries out the reaction ATP + H2O = ADP + phosphate + H(+). Its function is as follows. DEAD-box RNA helicase involved in cold tolerance, motility, and tolerance to heat, alkali and oxidative stress. The sequence is that of DEAD-box ATP-dependent RNA helicase CshB from Listeria monocytogenes serovar 1/2a (strain ATCC BAA-679 / EGD-e).